Consider the following 156-residue polypeptide: Phytohormone-binding protein (156 aa).

Gln22, Gln68, and Thr141 together coordinate gibberellin A3.

This sequence belongs to the BetVI family.

Functionally, binds gibberellin A3 (GA3) in vitro. The chain is Phytohormone-binding protein from Medicago truncatula (Barrel medic).